The primary structure comprises 489 residues: Rhamnulokinase (489 aa).

13–17 (ASSGR) is a binding site for ATP. An intrachain disulfide couples Cys68 to Cys222. Residues Gly83 and 236-238 (HDT) each bind substrate. The Proton acceptor role is filled by Asp237. Position 259 (Thr259) interacts with ATP. A substrate-binding site is contributed by Asn296. ATP is bound at residue Gln304. An intrachain disulfide couples Cys353 to Cys370. Gly402 provides a ligand contact to ATP. An intrachain disulfide couples Cys413 to Cys417.

This sequence belongs to the rhamnulokinase family. Mg(2+) serves as cofactor.

The enzyme catalyses L-rhamnulose + ATP = L-rhamnulose 1-phosphate + ADP + H(+). It functions in the pathway carbohydrate degradation; L-rhamnose degradation; glycerone phosphate from L-rhamnose: step 2/3. Functionally, involved in the catabolism of L-rhamnose (6-deoxy-L-mannose). Catalyzes the transfer of the gamma-phosphate group from ATP to the 1-hydroxyl group of L-rhamnulose to yield L-rhamnulose 1-phosphate. The protein is Rhamnulokinase of Shigella sonnei (strain Ss046).